The following is a 150-amino-acid chain: Large ribosomal subunit protein bL9 (150 aa).

Belongs to the bacterial ribosomal protein bL9 family.

In terms of biological role, binds to the 23S rRNA. This Burkholderia ambifaria (strain MC40-6) protein is Large ribosomal subunit protein bL9.